We begin with the raw amino-acid sequence, 423 residues long: Methionine aminopeptidase 2 (423 aa).

Positions 1-17 (MTDVIDAKPEEAKKVPP) are enriched in basic and acidic residues. Residues 1–89 (MTDVIDAKPE…IQPYKDDNAY (89 aa)) are disordered. The span at 18–29 (EVEDEDSGDESA) shows a compositional bias: acidic residues. Basic residues predominate over residues 41–54 (KKKKKKKKPKKKKK). Residue His-176 coordinates substrate. Positions 196, 207, and 276 each coordinate a divalent metal cation. A substrate-binding site is contributed by His-284. A divalent metal cation contacts are provided by Glu-309 and Glu-404.

It belongs to the peptidase M24A family. Methionine aminopeptidase eukaryotic type 2 subfamily. The cofactor is Co(2+). It depends on Zn(2+) as a cofactor. Mn(2+) serves as cofactor. Fe(2+) is required as a cofactor.

Its subcellular location is the cytoplasm. It catalyses the reaction Release of N-terminal amino acids, preferentially methionine, from peptides and arylamides.. Cotranslationally removes the N-terminal methionine from nascent proteins. The N-terminal methionine is often cleaved when the second residue in the primary sequence is small and uncharged (Met-Ala-, Cys, Gly, Pro, Ser, Thr, or Val). This is Methionine aminopeptidase 2 from Schizophyllum commune (strain H4-8 / FGSC 9210) (Split gill fungus).